Reading from the N-terminus, the 66-residue chain is Toxin Tppa2 (66 aa).

Positions 1–63 (KDGYLVGNDG…TWSRATNKCG (63 aa)) constitute an LCN-type CS-alpha/beta domain. Disulfide bonds link Cys11-Cys62, Cys15-Cys37, Cys23-Cys43, and Cys27-Cys45. The residue at position 62 (Cys62) is a Cysteine amide.

It belongs to the long (4 C-C) scorpion toxin superfamily. Sodium channel inhibitor family. Beta subfamily. Expressed by the venom gland.

It is found in the secreted. In terms of biological role, beta toxins bind voltage-independently at site-4 of sodium channels (Nav) and shift the voltage of activation toward more negative potentials thereby affecting sodium channel activation and promoting spontaneous and repetitive firing. The protein is Toxin Tppa2 of Tityus pachyurus (Colombian scorpion).